Reading from the N-terminus, the 252-residue chain is 5'-nucleotidase SurE (252 aa).

A divalent metal cation contacts are provided by aspartate 8, aspartate 9, serine 39, and asparagine 91.

It belongs to the SurE nucleotidase family. A divalent metal cation serves as cofactor.

It localises to the cytoplasm. The enzyme catalyses a ribonucleoside 5'-phosphate + H2O = a ribonucleoside + phosphate. Nucleotidase that shows phosphatase activity on nucleoside 5'-monophosphates. This Legionella pneumophila (strain Lens) protein is 5'-nucleotidase SurE.